Consider the following 384-residue polypeptide: 4-hydroxy-3-methylbut-2-en-1-yl diphosphate synthase (flavodoxin) (384 aa).

Positions 280, 283, 315, and 322 each coordinate [4Fe-4S] cluster.

This sequence belongs to the IspG family. [4Fe-4S] cluster serves as cofactor.

It carries out the reaction (2E)-4-hydroxy-3-methylbut-2-enyl diphosphate + oxidized [flavodoxin] + H2O + 2 H(+) = 2-C-methyl-D-erythritol 2,4-cyclic diphosphate + reduced [flavodoxin]. Its pathway is isoprenoid biosynthesis; isopentenyl diphosphate biosynthesis via DXP pathway; isopentenyl diphosphate from 1-deoxy-D-xylulose 5-phosphate: step 5/6. Converts 2C-methyl-D-erythritol 2,4-cyclodiphosphate (ME-2,4cPP) into 1-hydroxy-2-methyl-2-(E)-butenyl 4-diphosphate. This is 4-hydroxy-3-methylbut-2-en-1-yl diphosphate synthase (flavodoxin) from Frankia alni (strain DSM 45986 / CECT 9034 / ACN14a).